Consider the following 302-residue polypeptide: N-acetylmuramic acid 6-phosphate etherase (302 aa).

The 164-residue stretch at 58–221 (IGEAFLNGGR…STGAMVKTGK (164 aa)) folds into the SIS domain. The active-site Proton donor is the E86. The active site involves E117.

It belongs to the GCKR-like family. MurNAc-6-P etherase subfamily. Homodimer.

The catalysed reaction is N-acetyl-D-muramate 6-phosphate + H2O = N-acetyl-D-glucosamine 6-phosphate + (R)-lactate. It participates in amino-sugar metabolism; N-acetylmuramate degradation. Functionally, specifically catalyzes the cleavage of the D-lactyl ether substituent of MurNAc 6-phosphate, producing GlcNAc 6-phosphate and D-lactate. In Clostridium botulinum (strain Hall / ATCC 3502 / NCTC 13319 / Type A), this protein is N-acetylmuramic acid 6-phosphate etherase.